The sequence spans 385 residues: MTVSNKTQTALVGSPDGAIILSDTAPLPPSQLEDEQVAVAVQAVSLNPVDTKMAGDYHTPGAISGCEFAGVVTAVGPGAASEWGLGPGDRVSAAIMGMNPLRPSIGAFAQHSVAPAHCLLKMRDDWGFAQAAGLGNSWYTVAWALFHVMGLPAGPELEPLHTKHPPPAREPRISIDNPAPNGGGGKRTTVLVSGGSSSTGTCAIQLLKLAGFDVVATSSARNFDLVRSYGADAVFDHSSPSVAADIKAHTRNGLRLALDCITTPDTTRLCYGAIGRTGGRYVSLDPYSEVVAASRAVVRADWVLGPELMGEDVGWPAPHGRKGNPEAKAFCKVWNRTLQGLLDRGAIRTHPQRVRDTGLRGVLEGLDDIREKRVSGEKLVYTLQV.

49–52 (VDTK) is an NADP(+) binding site. 136 to 143 (NSWYTVAW) contributes to the substrate binding site. Residues 196–199 (SSST), 219–222 (SARN), and 284–285 (LD) contribute to the NADP(+) site. 305–309 (GPELM) serves as a coordination point for substrate. 374-375 (VS) provides a ligand contact to NADP(+).

It belongs to the zinc-containing alcohol dehydrogenase family. In terms of assembly, monomer.

It catalyses the reaction (2S,4S)-4-hydroxy-4-methylglutamate + 8 malonyl-CoA + 3 S-adenosyl-L-methionine + ATP + 8 NADPH + 11 H(+) = (2S)-3-[(2S)-3,5-dioxo-4-[(2E,4R,6R,8E,10E,12E)-4,6,12-trimethyltetradeca-2,8,10,12-tetraenoyl]pyrrolidin-2-yl]-2-hydroxy-2-methylpropanoate + AMP + 3 S-adenosyl-L-homocysteine + 8 CO2 + diphosphate + 8 NADP(+) + 8 CoA + 6 H2O. The enzyme catalyses (2S,4R)-4-hydroxy-4-methylglutamate + 8 malonyl-CoA + 3 S-adenosyl-L-methionine + ATP + 8 NADPH + 11 H(+) = (2R)-3-[(2S)-3,5-dioxo-4-[(2E,4R,6R,8E,10E,12E)-4,6,12-trimethyltetradeca-2,8,10,12-tetraenoyl]pyrrolidin-2-yl]-2-hydroxy-2-methylpropanoate + AMP + 3 S-adenosyl-L-homocysteine + 8 CO2 + diphosphate + 8 NADP(+) + 8 CoA + 6 H2O. The protein operates within secondary metabolite biosynthesis. Functionally, trans-enoyl reductase; part of the gene cluster that mediates the biosynthesis of the tetramic acids Sch210971 and Sch210972, potential anti-HIV fungal natural product that contain a decalin core. The PKS module of tasS together with the enoylreductase tasC catalyze the formation of the polyketide unit which is then conjugated to 4-hydroxyl-4-methyl glutamate (HMG) by the condensation domain of the tasS NRPS module. One unique structural feature of Sch210971 and Sch210972 is the tetramic acid motif proposed to be derived from the non-proteinogenic amino acid HMG, by a Dieckmann-type condensation catalyzed by the reductase domain of tasS. The aldolase tasA catalyzes the aldol condensation of 2 molecules of pyruvic acid to yield the intermediate 4-hydroxyl-4-methyl-2-oxoglutarate (HMOG), which can then be stereoselectively transaminated, may be by tasG, to form HMG. The Diels-Alderase tas3 then uses the Dieckmann product of tasS as substrate and catalyzes the Diels-Alder cycloaddition to form the decalin ring of Sch210971 and Sch210972. This is Trans-enoyl reductase tasC from Hapsidospora irregularis.